A 518-amino-acid chain; its full sequence is Hyccin (518 aa).

Disordered regions lie at residues 385-410 (GLRR…MDQL) and 466-492 (VFSG…EGVA). A compositionally biased stretch (basic and acidic residues) spans 393–403 (SSKEKDKEKDA). Residues 466 to 484 (VFSGNQPSSRASSPTSNHV) are compositionally biased toward polar residues.

Belongs to the Hyccin family. In terms of assembly, component of a phosphatidylinositol 4-kinase (PI4K) complex.

It is found in the cytoplasm. The protein resides in the cytosol. It localises to the cell membrane. In terms of biological role, component of a complex required to localize phosphatidylinositol 4-kinase (PI4K) to the plasma membrane. The complex acts as a regulator of phosphatidylinositol 4-phosphate (PtdIns(4)P) synthesis. The polypeptide is Hyccin (hycc1) (Danio rerio (Zebrafish)).